A 455-amino-acid chain; its full sequence is Phosphoglucosamine/phosphogalactosamine mutase (455 aa).

S97 functions as the Phosphoserine intermediate in the catalytic mechanism. Residues S97, D241, D243, and D245 each coordinate Mg(2+). The residue at position 97 (S97) is a Phosphoserine.

It belongs to the phosphohexose mutase family. The cofactor is Mg(2+). Post-translationally, activated by phosphorylation.

It carries out the reaction alpha-D-glucosamine 1-phosphate = D-glucosamine 6-phosphate. It catalyses the reaction D-galactosamine 6-phosphate = alpha-D-galactosamine 1-phosphate. In terms of biological role, involved in the synthesis of UDP-N-acetylglucosamine (UDP-GlcNAc) and UDP-N-acetylgalactosamine (UDP-GalNAc). Catalyzes the conversion of glucosamine-6-phosphate to glucosamine-1-phosphate and of galactosamine-6-phosphate to galactosamine-1-phosphate. The sequence is that of Phosphoglucosamine/phosphogalactosamine mutase from Sulfurisphaera tokodaii (strain DSM 16993 / JCM 10545 / NBRC 100140 / 7) (Sulfolobus tokodaii).